The following is a 698-amino-acid chain: Elongation factor G 2 (698 aa).

Residues 8 to 290 enclose the tr-type G domain; it reads ERYRNIGIMA…AVVDYLPSPV (283 aa). GTP contacts are provided by residues 17–24, 88–92, and 142–145; these read AHIDAGKT, DTPGH, and NKMD.

Belongs to the TRAFAC class translation factor GTPase superfamily. Classic translation factor GTPase family. EF-G/EF-2 subfamily.

It localises to the cytoplasm. Its function is as follows. Catalyzes the GTP-dependent ribosomal translocation step during translation elongation. During this step, the ribosome changes from the pre-translocational (PRE) to the post-translocational (POST) state as the newly formed A-site-bound peptidyl-tRNA and P-site-bound deacylated tRNA move to the P and E sites, respectively. Catalyzes the coordinated movement of the two tRNA molecules, the mRNA and conformational changes in the ribosome. This Methylococcus capsulatus (strain ATCC 33009 / NCIMB 11132 / Bath) protein is Elongation factor G 2.